Consider the following 432-residue polypeptide: Glutamyl-tRNA reductase (432 aa).

Residues 49–52 (TCNR), serine 107, 112–114 (ETQ), and glutamine 118 contribute to the substrate site. The Nucleophile role is filled by cysteine 50. 186-191 (GAGEMG) provides a ligand contact to NADP(+).

Belongs to the glutamyl-tRNA reductase family. As to quaternary structure, homodimer.

It carries out the reaction (S)-4-amino-5-oxopentanoate + tRNA(Glu) + NADP(+) = L-glutamyl-tRNA(Glu) + NADPH + H(+). It functions in the pathway porphyrin-containing compound metabolism; protoporphyrin-IX biosynthesis; 5-aminolevulinate from L-glutamyl-tRNA(Glu): step 1/2. In terms of biological role, catalyzes the NADPH-dependent reduction of glutamyl-tRNA(Glu) to glutamate 1-semialdehyde (GSA). This Campylobacter jejuni subsp. jejuni serotype O:23/36 (strain 81-176) protein is Glutamyl-tRNA reductase.